The primary structure comprises 135 residues: uncharacterized protein (135 aa).

A disordered region spans residues 100 to 125 (KESPATSSEDISSCSDCDSERLQSDD). Low complexity predominate over residues 106–115 (SSEDISSCSD).

This is an uncharacterized protein from Microplitis demolitor (Parasitoid wasp).